A 430-amino-acid polypeptide reads, in one-letter code: Serine--tRNA ligase (430 aa).

An L-serine-binding site is contributed by 237 to 239 (TAE). 268–270 (RSE) contributes to the ATP binding site. Glu-291 lines the L-serine pocket. 355-358 (EISS) contributes to the ATP binding site. Residue Ser-391 participates in L-serine binding.

Belongs to the class-II aminoacyl-tRNA synthetase family. Type-1 seryl-tRNA synthetase subfamily. In terms of assembly, homodimer. The tRNA molecule binds across the dimer.

It localises to the cytoplasm. The enzyme catalyses tRNA(Ser) + L-serine + ATP = L-seryl-tRNA(Ser) + AMP + diphosphate + H(+). It carries out the reaction tRNA(Sec) + L-serine + ATP = L-seryl-tRNA(Sec) + AMP + diphosphate + H(+). The protein operates within aminoacyl-tRNA biosynthesis; selenocysteinyl-tRNA(Sec) biosynthesis; L-seryl-tRNA(Sec) from L-serine and tRNA(Sec): step 1/1. Functionally, catalyzes the attachment of serine to tRNA(Ser). Is also able to aminoacylate tRNA(Sec) with serine, to form the misacylated tRNA L-seryl-tRNA(Sec), which will be further converted into selenocysteinyl-tRNA(Sec). The protein is Serine--tRNA ligase of Shigella boydii serotype 18 (strain CDC 3083-94 / BS512).